The sequence spans 140 residues: Putative transcription elongation factor S-II-like protein 349L (140 aa).

Residues 100-139 (GAIKCKCGSERVFSFSKQTRSGDESTSVFALCSSCKSKWV) form a TFIIS-type zinc finger. Positions 104, 106, 131, and 134 each coordinate Zn(2+).

Belongs to the IIV-6 349L family.

The protein is Putative transcription elongation factor S-II-like protein 349L of Acheta domesticus (House cricket).